A 291-amino-acid polypeptide reads, in one-letter code: Meteorin (291 aa).

A signal peptide spans Met1–Ala21. 5 disulfides stabilise this stretch: Cys28–Cys49, Cys80–Cys116, Cys169–Cys240, Cys172–Cys264, and Cys182–Cys286.

Belongs to the meteorin family. As to quaternary structure, monomer. In terms of tissue distribution, highly expressed in brain. Expressed in undifferentiated neural progenitors and in astrocyte lineage, particularly in Bergmann glia, a subtype of radial glia, and a few discrete neuronal populations residing in the superior colliculus, the ocular motor nucleus, the raphe and pontine nuclei, and in various thalamic nuclei. Weakly expressed in heart, kidney, skeletal muscle, spleen, testis, gut and lung.

The protein resides in the secreted. In terms of biological role, involved in both glial cell differentiation and axonal network formation during neurogenesis. Promotes astrocyte differentiation and transforms cerebellar astrocytes into radial glia. Also induces axonal extension in small and intermediate neurons of sensory ganglia by activating nearby satellite glia. The protein is Meteorin (Metrn) of Mus musculus (Mouse).